The primary structure comprises 191 residues: Fe/S biogenesis protein NfuA (191 aa).

[4Fe-4S] cluster contacts are provided by Cys-149 and Cys-152.

It belongs to the NfuA family. In terms of assembly, homodimer. The cofactor is [4Fe-4S] cluster.

Involved in iron-sulfur cluster biogenesis. Binds a 4Fe-4S cluster, can transfer this cluster to apoproteins, and thereby intervenes in the maturation of Fe/S proteins. Could also act as a scaffold/chaperone for damaged Fe/S proteins. The sequence is that of Fe/S biogenesis protein NfuA from Citrobacter koseri (strain ATCC BAA-895 / CDC 4225-83 / SGSC4696).